The sequence spans 1059 residues: Carbamoyl phosphate synthase large chain (1059 aa).

The interval 1–401 is carboxyphosphate synthetic domain; the sequence is MPKRQDISKI…AMLKAVRSLE (401 aa). 12 residues coordinate ATP: Arg-129, Arg-169, Gly-175, Gly-176, Arg-208, Ile-210, Glu-215, Gly-241, Ile-242, His-243, Gln-284, and Glu-298. Residues 133–327 form the ATP-grasp 1 domain; that stretch reads KALMERLNEP…IAKMAAKIAV (195 aa). Residues Gln-284, Glu-298, and Asn-300 each contribute to the Mg(2+) site. 3 residues coordinate Mn(2+): Gln-284, Glu-298, and Asn-300. Positions 402–546 are oligomerization domain; it reads IGAIGLDDIT…YATYEQENES (145 aa). Positions 547–929 are carbamoyl phosphate synthetic domain; the sequence is IISTKKSVLV…ALYKAFIASN (383 aa). In terms of domain architecture, ATP-grasp 2 spans 671 to 861; sequence DQVIKELALP…LAQLATRVML (191 aa). ATP contacts are provided by Arg-707, Ser-746, Leu-748, Glu-752, Gly-777, Val-778, His-779, Ser-780, Gln-820, and Glu-832. Residues Gln-820, Glu-832, and Asn-834 each coordinate Mg(2+). The Mn(2+) site is built by Gln-820, Glu-832, and Asn-834. The region spanning 930 to 1059 is the MGS-like domain; it reads IKVPRYGNVL…SRSFTVKEMH (130 aa). An allosteric domain region spans residues 930–1059; the sequence is IKVPRYGNVL…SRSFTVKEMH (130 aa).

Belongs to the CarB family. Composed of two chains; the small (or glutamine) chain promotes the hydrolysis of glutamine to ammonia, which is used by the large (or ammonia) chain to synthesize carbamoyl phosphate. Tetramer of heterodimers (alpha,beta)4. It depends on Mg(2+) as a cofactor. Mn(2+) serves as cofactor.

It carries out the reaction hydrogencarbonate + L-glutamine + 2 ATP + H2O = carbamoyl phosphate + L-glutamate + 2 ADP + phosphate + 2 H(+). The catalysed reaction is hydrogencarbonate + NH4(+) + 2 ATP = carbamoyl phosphate + 2 ADP + phosphate + 2 H(+). The protein operates within amino-acid biosynthesis; L-arginine biosynthesis; carbamoyl phosphate from bicarbonate: step 1/1. It participates in pyrimidine metabolism; UMP biosynthesis via de novo pathway; (S)-dihydroorotate from bicarbonate: step 1/3. Functionally, large subunit of the glutamine-dependent carbamoyl phosphate synthetase (CPSase). CPSase catalyzes the formation of carbamoyl phosphate from the ammonia moiety of glutamine, carbonate, and phosphate donated by ATP, constituting the first step of 2 biosynthetic pathways, one leading to arginine and/or urea and the other to pyrimidine nucleotides. The large subunit (synthetase) binds the substrates ammonia (free or transferred from glutamine from the small subunit), hydrogencarbonate and ATP and carries out an ATP-coupled ligase reaction, activating hydrogencarbonate by forming carboxy phosphate which reacts with ammonia to form carbamoyl phosphate. This is Carbamoyl phosphate synthase large chain from Leuconostoc mesenteroides subsp. mesenteroides (strain ATCC 8293 / DSM 20343 / BCRC 11652 / CCM 1803 / JCM 6124 / NCDO 523 / NBRC 100496 / NCIMB 8023 / NCTC 12954 / NRRL B-1118 / 37Y).